Reading from the N-terminus, the 208-residue chain is Thymidylate kinase (208 aa).

Position 10 to 17 (10 to 17 (GPDGSGKT)) interacts with ATP.

This sequence belongs to the thymidylate kinase family.

It carries out the reaction dTMP + ATP = dTDP + ADP. Phosphorylation of dTMP to form dTDP in both de novo and salvage pathways of dTTP synthesis. The sequence is that of Thymidylate kinase from Listeria monocytogenes serotype 4b (strain CLIP80459).